The following is a 3425-amino-acid chain: Genome polyprotein (3425 aa).

The interaction with host EXOC1 stretch occupies residues 3–16 (NKKPGRPGSGRVVN). Positions 38–73 (VLRGAGPIRFVLALLTFFKFTALRPTIGMLKRWKLV) are hydrophobic; homodimerization of capsid protein C. A propeptide spans 105–120 (GGSCSWIIMLLPIVAG) (ER anchor for the capsid protein C, removed in mature form by serine protease NS3). The helical transmembrane segment at 105–125 (GGSCSWIIMLLPIVAGLKLGN) threads the bilayer. A glycan (N-linked (GlcNAc...) asparagine; by host) is linked at asparagine 135. A run of 2 helical transmembrane segments spans residues 247 to 267 (WALR…NLGT) and 273 to 293 (IIFT…CLGM). 6 disulfides stabilise this stretch: cysteine 290–cysteine 317, cysteine 347–cysteine 403, cysteine 361–cysteine 392, cysteine 379–cysteine 408, cysteine 477–cysteine 575, and cysteine 592–cysteine 623. A fusion peptide region spans residues 385-398 (DRGWGNGCGLFGKG). 2 consecutive transmembrane segments (helical) span residues 740-760 (LFGG…LWMG) and 768-788 (ISMT…NVNA). Cysteine 792 and cysteine 803 are joined by a disulfide. 3 N-linked (GlcNAc...) asparagine; by host glycosylation sites follow: asparagine 918, asparagine 963, and asparagine 995. 4 disulfides stabilise this stretch: cysteine 967-cysteine 1011, cysteine 1068-cysteine 1117, cysteine 1079-cysteine 1100, and cysteine 1101-cysteine 1104. The next 7 helical transmembrane spans lie at 1138 to 1158 (VMAF…VMIV), 1169 to 1189 (TAPI…FGGI), 1214 to 1234 (IVHL…IGFL), 1290 to 1310 (FALP…IDVV), 1337 to 1357 (MLLG…FAGL), 1369 to 1389 (WPVS…GGIA), and 1395 to 1415 (SMAI…VTGF). Residues 1421 to 1460 (LEKASDISWSEEARVTGASQRFDVEIDQDGNMRLLNDPGV) are interacts with and activates NS3 protease. Positions 1499 to 1676 (GGVIWDVPAP…EKKEEEVPQV (178 aa)) constitute a Peptidase S7 domain. Catalysis depends on charge relay system; for serine protease NS3 activity residues histidine 1549, aspartate 1573, and serine 1633. A Helicase ATP-binding domain is found at 1679 to 1835 (ENMLRKRQLT…DSNSPITDIE (157 aa)). The segment at 1683 to 1686 (RKRQ) is important for RNA-binding. 1692 to 1699 (LHPGSGKT) is a binding site for ATP. A DEAH box motif is present at residues 1783–1786 (DEAH). Residues 1845-2011 (SGYEWITDFQ…GLVAQLYGPE (167 aa)) form the Helicase C-terminal domain. The tract at residues 2162–2166 (EELPE) is regulates the ATPase activity of NS3 helicase. A run of 8 helical transmembrane segments spans residues 2169–2189 (ETFL…LFFV), 2194–2214 (LGKT…LWIA), 2216–2236 (VPAQ…IVLI), 2252–2272 (VFMI…MGWL), 2306–2326 (AWAA…HLII), 2334–2354 (LMAM…MPFV), 2371–2391 (FTMT…AFLV), and 2441–2461 (CVLV…LTLT). The region spanning 2521-2786 (GGGTGRTLGE…DVDLGSGTRA (266 aa)) is the mRNA cap 0-1 NS5-type MT domain. Serine 2576 lines the S-adenosyl-L-methionine pocket. Position 2576 is a phosphoserine (serine 2576). The For 2'-O-MTase activity role is filled by lysine 2581. 5 residues coordinate S-adenosyl-L-methionine: glycine 2606, tryptophan 2607, threonine 2624, lysine 2625, and valine 2652. Aspartate 2666 (for 2'-O-MTase activity) is an active-site residue. S-adenosyl-L-methionine is bound at residue isoleucine 2667. Residues lysine 2702 and glutamate 2738 each act as for 2'-O-MTase activity in the active site. Tyrosine 2740 provides a ligand contact to S-adenosyl-L-methionine. Zn(2+) contacts are provided by glutamate 2960, histidine 2964, cysteine 2969, and cysteine 2972. In terms of domain architecture, RdRp catalytic spans 3050–3202 (GLMYADDTAG…KPADDRFATA (153 aa)). Positions 3237, 3253, and 3372 each coordinate Zn(2+). The PDZ-binding motif lies at 3423 to 3425 (GVL).

The protein in the N-terminal section; belongs to the class I-like SAM-binding methyltransferase superfamily. mRNA cap 0-1 NS5-type methyltransferase family. As to quaternary structure, homodimer. Forms heterodimers with envelope protein E in the endoplasmic reticulum and Golgi. In terms of assembly, homodimer; in the endoplasmic reticulum and Golgi. Interacts with protein prM. Interacts with non-structural protein 1. As to quaternary structure, homodimer; Homohexamer when secreted. Interacts with envelope protein E. NS1 interacts with NS4B. Interacts with host MAVS (via C-terminus); this interaction blocks the interaction of MAVS with RIGI or IFIH1/MDA5. Interacts (via N-terminus) with serine protease NS3. In terms of assembly, forms a heterodimer with serine protease NS3. May form homooligomers. As to quaternary structure, forms a heterodimer with NS2B. Interacts with non-structural protein 2A (via N-terminus). Interacts with NS4B. Interacts with unphosphorylated RNA-directed RNA polymerase NS5; this interaction stimulates RNA-directed RNA polymerase NS5 guanylyltransferase activity. Interacts with serine protease NS3. In terms of assembly, homodimer. Specific enzymatic cleavages in vivo yield mature proteins. Cleavages in the lumen of endoplasmic reticulum are performed by host signal peptidase, whereas cleavages in the cytoplasmic side are performed by serine protease NS3. Signal cleavage at the 2K-4B site requires a prior NS3 protease-mediated cleavage at the 4A-2K site. Both NS2A and NS2B proteins are required in cis for NS2A/2B proteolytic processing. In terms of processing, cleaved in post-Golgi vesicles by a host furin, releasing the mature small envelope protein M, and peptide pr. This cleavage is incomplete as up to 30% of viral particles still carry uncleaved prM. Post-translationally, N-glycosylated. N-glycosylated. The excreted form is glycosylated and this is required for efficient secretion of the protein from infected cells. In terms of processing, phosphorylated on serines residues. This phosphorylation may trigger NS5 nuclear localization.

It is found in the virion. The protein localises to the host nucleus. It localises to the host cytoplasm. Its subcellular location is the host perinuclear region. The protein resides in the secreted. It is found in the virion membrane. The protein localises to the host endoplasmic reticulum membrane. The enzyme catalyses Selective hydrolysis of -Xaa-Xaa-|-Yaa- bonds in which each of the Xaa can be either Arg or Lys and Yaa can be either Ser or Ala.. The catalysed reaction is RNA(n) + a ribonucleoside 5'-triphosphate = RNA(n+1) + diphosphate. It catalyses the reaction a ribonucleoside 5'-triphosphate + H2O = a ribonucleoside 5'-diphosphate + phosphate + H(+). It carries out the reaction ATP + H2O = ADP + phosphate + H(+). The enzyme catalyses a 5'-end (5'-triphosphoguanosine)-ribonucleoside in mRNA + S-adenosyl-L-methionine = a 5'-end (N(7)-methyl 5'-triphosphoguanosine)-ribonucleoside in mRNA + S-adenosyl-L-homocysteine. The catalysed reaction is a 5'-end (N(7)-methyl 5'-triphosphoguanosine)-ribonucleoside in mRNA + S-adenosyl-L-methionine = a 5'-end (N(7)-methyl 5'-triphosphoguanosine)-(2'-O-methyl-ribonucleoside) in mRNA + S-adenosyl-L-homocysteine + H(+). Functionally, capsid protein self-assembles to form an icosahedral capsid about 40 nm in diameter. Plays a role in virus budding by binding to the cell membrane and gathering the viral RNA into a nucleocapsid that forms the core of a mature virus particle. Prevents premature fusion activity of envelope proteins in trans-Golgi by binding to envelope protein E at pH6.0. After virion release in extracellular space, gets dissociated from E dimers. In terms of biological role, acts as a chaperone for envelope protein E during intracellular virion assembly by masking and inactivating envelope protein E fusion peptide. prM is the only viral peptide matured by host furin in the trans-Golgi network probably to avoid catastrophic activation of the viral fusion activity in acidic Golgi compartment prior to virion release. prM-E cleavage is inefficient, and many virions are only partially matured. These uncleaved prM would play a role in immune evasion. Its function is as follows. May play a role in virus budding. Exerts cytotoxic effects by activating a mitochondrial apoptotic pathway through M ectodomain. May display a viroporin activity. Functionally, binds to host cell surface receptor and mediates fusion between viral and cellular membranes. Envelope protein is synthesized in the endoplasmic reticulum in the form of heterodimer with protein prM. They play a role in virion budding in the ER, and the newly formed immature particle is covered with 60 spikes composed of heterodimer between precursor prM and envelope protein E. The virion is transported to the Golgi apparatus where the low pH causes dissociation of PrM-E heterodimers and formation of E homodimers. Involved in immune evasion, pathogenesis and viral replication. Interacts with host MAVS and blocks MAVS binding to RIGI or IFIH1/MDA5, thereby leading to evasion of the innate immune response. Once cleaved off the polyprotein, is targeted to three destinations: the viral replication cycle, the plasma membrane and the extracellular compartment. Essential for viral replication. Required for formation of the replication complex and recruitment of other non-structural proteins to the ER-derived membrane structures. Excreted as a hexameric lipoparticle that plays a role against host immune response. In terms of biological role, component of the viral RNA replication complex that functions in virion assembly. Its function is as follows. Required cofactor for the serine protease function of NS3. May have membrane-destabilizing activity and form viroporins. Functionally, displays three enzymatic activities: serine protease, NTPase and RNA helicase. NS3 serine protease, in association with NS2B, performs its autocleavage and cleaves the polyprotein at dibasic sites in the cytoplasm: C-prM, NS2A-NS2B, NS2B-NS3, NS3-NS4A, NS4A-2K and NS4B-NS5. NS3 RNA helicase binds RNA and unwinds dsRNA in the 3' to 5' direction. Regulates the ATPase activity of the NS3 helicase activity. NS4A allows NS3 helicase to conserve energy during unwinding. In terms of biological role, functions as a signal peptide for NS4B. Its function is as follows. Induces the formation of ER-derived membrane vesicles where the viral replication takes place. Functionally, replicates the viral (+) and (-) RNA genome, and performs the capping of genomes in the cytoplasm. NS5 methylates viral RNA cap at guanine N-7 and ribose 2'-O positions. The chain is Genome polyprotein from Anas (ducks).